The primary structure comprises 58 residues: ATP synthase subunit a (58 aa).

2 helical membrane passes run 11 to 31 (EIFYFIGALGPLFIVLALTGL) and 35 to 55 (VAILQAYVFTILICIYLNDAI).

It belongs to the ATPase A chain family. In terms of assembly, F-type ATPases have 2 components, CF(1) - the catalytic core - and CF(0) - the membrane proton channel. CF(1) has five subunits: alpha(3), beta(3), gamma(1), delta(1), epsilon(1). CF(0) has three main subunits: a, b and c.

It is found in the mitochondrion inner membrane. In terms of biological role, mitochondrial membrane ATP synthase (F(1)F(0) ATP synthase or Complex V) produces ATP from ADP in the presence of a proton gradient across the membrane which is generated by electron transport complexes of the respiratory chain. F-type ATPases consist of two structural domains, F(1) - containing the extramembraneous catalytic core and F(0) - containing the membrane proton channel, linked together by a central stalk and a peripheral stalk. During catalysis, ATP synthesis in the catalytic domain of F(1) is coupled via a rotary mechanism of the central stalk subunits to proton translocation. Key component of the proton channel; it may play a direct role in the translocation of protons across the membrane. This chain is ATP synthase subunit a (ATP6), found in Brassica tournefortii (Wild turnip).